We begin with the raw amino-acid sequence, 480 residues long: MAASAVCRAAGAGTRVLLRTRRSPALLRSSDLRGTATYAQALQSVPETQVSQLDNGLRVASEQSSQPTCTVGVWIDAGSRYESEKNNGAGYFVEHLAFKGTKNRPGNALEKEVESMGAHLNAYSTREHTAYYIKALSKDLPKAVELLADIVQNCSLEDSQIEKERDVILQELQENDTSMRDVVFNYLHATAFQGTPLAQSVEGPSENVRKLSRADLTEYLSRHYKAPRMVLAAAGGLEHRQLLDLAQKHFSGLSGTYDEDAVPTLSPCRFTGSQICHREDGLPLAHVAIAVEGPGWAHPDNVALQVANAIIGHYDCTYGGGAHLSSPLASIAATNKLCQSFQTFNICYADTGLLGAHFVCDHMSIDDMMFVLQGQWMRLCTSATESEVLRGKNLLRNALVSHLDGTTPVCEDIGRSLLTYGRRIPLAEWESRIAEVDARVVREVCSKYFYDQCPAVAGFGPIEQLPDYNRIRSGMFWLRF.

The N-terminal 34 residues, 1–34 (MAASAVCRAAGAGTRVLLRTRRSPALLRSSDLRG), are a transit peptide targeting the mitochondrion. 2 positions are modified to N6-acetyllysine: Lys111 and Lys138. Residue Lys163 is modified to N6-acetyllysine; alternate. Lys163 bears the N6-succinyllysine; alternate mark. Residue Ser212 is modified to Phosphoserine. The residue at position 248 (Lys248) is an N6-acetyllysine.

It belongs to the peptidase M16 family. UQCRC1/QCR1 subfamily. In terms of assembly, component of the ubiquinol-cytochrome c oxidoreductase (cytochrome b-c1 complex, complex III, CIII), a multisubunit enzyme composed of 11 subunits. The complex is composed of 3 respiratory subunits cytochrome b, cytochrome c1 and Rieske protein UQCRFS1, 2 core protein subunits UQCRC1/QCR1 and UQCRC2/QCR2, and 6 low-molecular weight protein subunits UQCRH/QCR6, UQCRB/QCR7, UQCRQ/QCR8, UQCR10/QCR9, UQCR11/QCR10 and subunit 9, the cleavage product of Rieske protein UQCRFS1. The complex exists as an obligatory dimer and forms supercomplexes (SCs) in the inner mitochondrial membrane with NADH-ubiquinone oxidoreductase (complex I, CI) and cytochrome c oxidase (complex IV, CIV), resulting in different assemblies (supercomplex SCI(1)III(2)IV(1) and megacomplex MCI(2)III(2)IV(2)). Interacts with UQCC6. Interacts with STMP1.

It localises to the mitochondrion inner membrane. Component of the ubiquinol-cytochrome c oxidoreductase, a multisubunit transmembrane complex that is part of the mitochondrial electron transport chain which drives oxidative phosphorylation. The respiratory chain contains 3 multisubunit complexes succinate dehydrogenase (complex II, CII), ubiquinol-cytochrome c oxidoreductase (cytochrome b-c1 complex, complex III, CIII) and cytochrome c oxidase (complex IV, CIV), that cooperate to transfer electrons derived from NADH and succinate to molecular oxygen, creating an electrochemical gradient over the inner membrane that drives transmembrane transport and the ATP synthase. The cytochrome b-c1 complex catalyzes electron transfer from ubiquinol to cytochrome c, linking this redox reaction to translocation of protons across the mitochondrial inner membrane, with protons being carried across the membrane as hydrogens on the quinol. In the process called Q cycle, 2 protons are consumed from the matrix, 4 protons are released into the intermembrane space and 2 electrons are passed to cytochrome c. The 2 core subunits UQCRC1/QCR1 and UQCRC2/QCR2 are homologous to the 2 mitochondrial-processing peptidase (MPP) subunits beta-MPP and alpha-MPP respectively, and they seem to have preserved their MPP processing properties. May be involved in the in situ processing of UQCRFS1 into the mature Rieske protein and its mitochondrial targeting sequence (MTS)/subunit 9 when incorporated into complex III. Seems to play an important role in the maintenance of proper mitochondrial function in nigral dopaminergic neurons. This Bos taurus (Bovine) protein is Cytochrome b-c1 complex subunit 1, mitochondrial (UQCRC1).